The primary structure comprises 105 residues: Met repressor (105 aa).

The protein belongs to the MetJ family. Homodimer.

It is found in the cytoplasm. Its function is as follows. This regulatory protein, when combined with SAM (S-adenosylmethionine) represses the expression of the methionine regulon and of enzymes involved in SAM synthesis. In Vibrio cholerae serotype O1 (strain ATCC 39541 / Classical Ogawa 395 / O395), this protein is Met repressor.